The primary structure comprises 1049 residues: Presequence protease, mitochondrial (1049 aa).

A mitochondrion-targeting transit peptide spans 1–39 (MLRSYLHLGRHRTPAFRQPLGRLLRPTASILQYAQSRTL). Residue His-113 participates in Zn(2+) binding. The Proton acceptor role is filled by Glu-116. Residue His-117 participates in Zn(2+) binding. Glu-189 is a catalytic residue. Glu-222 lines the Zn(2+) pocket.

This sequence belongs to the peptidase M16 family. PreP subfamily. In terms of assembly, monomer and homodimer; homodimerization is induced by binding of the substrate. It depends on Zn(2+) as a cofactor.

The protein localises to the mitochondrion intermembrane space. Its subcellular location is the mitochondrion matrix. In terms of biological role, degrades mitochondrial transit peptides after their cleavage in the intermembrane space or in the matrix, and presequence peptides; clearance of these peptides is required to keep the presequence processing machinery running. Preferentially cleaves the N-terminal side of paired basic amino acid residues. Also degrades other unstructured peptides. May function as an ATP-dependent peptidase as opposed to a metalloendopeptidase. This chain is Presequence protease, mitochondrial (cym1), found in Emericella nidulans (strain FGSC A4 / ATCC 38163 / CBS 112.46 / NRRL 194 / M139) (Aspergillus nidulans).